The chain runs to 351 residues: MASGQMAPSLLRRPITFVSSCPPALRSFGALCPPTGSTDLIGGTGRDILIAAAPARRAPLHATLPLLRSLHTSPAPQLSASHQHQAQQQQQQTKQPQQPYDPQQDQVPSTSTASSSKPAADPVYNLPNAVSVARLVSGPLIGYWLVQGHYEAATLALAVSGASDWLDGWLARRLGASSVFGSYLDPLADKVLIGCVAAALLMNGAMPGWVAGVVVGRDVLLVAGSFVFRLRGFGWRWPGAAAFFRTVDTSAAAAGAATGAANGVASGGGGGGEGVSFMRPLLISKANTVLQLLLLGGYLLRGMDGGAGLQLLLPGGGGEELIMGLELATAATTVASGLAYGTMAVQGKLFK.

Positions Pro74–Ala120 are disordered. The span at Pro76–Ala120 shows a compositional bias: low complexity. Transmembrane regions (helical) follow at residues Pro139 to Val159, Val191 to Ala211, Ala251 to Gly271, Pro280 to Leu300, and Leu321 to Gly341.

It belongs to the CDP-alcohol phosphatidyltransferase class-I family. The cofactor is Mn(2+).

The protein resides in the mitochondrion inner membrane. The enzyme catalyses a CDP-1,2-diacyl-sn-glycerol + a 1,2-diacyl-sn-glycero-3-phospho-(1'-sn-glycerol) = a cardiolipin + CMP + H(+). Catalyzes the synthesis of cardiolipin (CL) (diphosphatidylglycerol) by specifically transferring a phosphatidyl group from CDP-diacylglycerol to phosphatidylglycerol (PG). CL is a key phospholipid in mitochondrial membranes and plays important roles in maintaining the functional integrity and dynamics of mitochondria under both optimal and stress conditions. Cannot catalyze the phosphatidyl group transfer from one PG molecule to another to form CL. The protein is Cardiolipin synthase (CMP-forming) of Chlamydomonas reinhardtii (Chlamydomonas smithii).